The primary structure comprises 379 residues: Chaperone protein DnaJ (379 aa).

Residues 5 to 70 (DYYEVLGVSR…QKRAAYDQYG (66 aa)) enclose the J domain. The CR-type zinc-finger motif lies at 134–212 (GVTKEIRIPT…CHGHGRVEKS (79 aa)). 8 residues coordinate Zn(2+): Cys-147, Cys-150, Cys-164, Cys-167, Cys-186, Cys-189, Cys-200, and Cys-203. CXXCXGXG motif repeat units follow at residues 147-154 (CDVCHGSG), 164-171 (CPTCHGAG), 186-193 (CPHCHGRG), and 200-207 (CNKCHGHG).

This sequence belongs to the DnaJ family. In terms of assembly, homodimer. Zn(2+) is required as a cofactor.

Its subcellular location is the cytoplasm. In terms of biological role, participates actively in the response to hyperosmotic and heat shock by preventing the aggregation of stress-denatured proteins and by disaggregating proteins, also in an autonomous, DnaK-independent fashion. Unfolded proteins bind initially to DnaJ; upon interaction with the DnaJ-bound protein, DnaK hydrolyzes its bound ATP, resulting in the formation of a stable complex. GrpE releases ADP from DnaK; ATP binding to DnaK triggers the release of the substrate protein, thus completing the reaction cycle. Several rounds of ATP-dependent interactions between DnaJ, DnaK and GrpE are required for fully efficient folding. Also involved, together with DnaK and GrpE, in the DNA replication of plasmids through activation of initiation proteins. The sequence is that of Chaperone protein DnaJ from Yersinia pseudotuberculosis serotype O:1b (strain IP 31758).